The chain runs to 225 residues: Probable proteasome subunit beta type-6 (225 aa).

This sequence belongs to the peptidase T1B family. In terms of assembly, the 26S proteasome consists of a 20S proteasome core and two 19S regulatory subunits. The 20S proteasome core is composed of 28 subunits that are arranged in four stacked rings, resulting in a barrel-shaped structure. The two end rings are each formed by seven alpha subunits, and the two central rings are each formed by seven beta subunits. The catalytic chamber with the active sites is on the inside of the barrel.

It localises to the cytoplasm. The protein localises to the nucleus. Functionally, non-catalytic component of the proteasome, a multicatalytic proteinase complex which is characterized by its ability to cleave peptides with Arg, Phe, Tyr, Leu, and Glu adjacent to the leaving group at neutral or slightly basic pH. The proteasome has an ATP-dependent proteolytic activity. The sequence is that of Probable proteasome subunit beta type-6 (pam1) from Schizosaccharomyces pombe (strain 972 / ATCC 24843) (Fission yeast).